We begin with the raw amino-acid sequence, 536 residues long: Suppressor of cytokine signaling 5 (536 aa).

The segment at 1 to 50 is required for interaction with IL4R; sequence MDKVGKMWNNFKYRCQNLFGHEGGSRSENVDMNSNRCLSVKEKNISIGDS. The segment at 115–175 is disordered; the sequence is SRHAPWGGKK…SVSSRTVGSR (61 aa). Positions 158–169 are enriched in low complexity; the sequence is VSSVHDMDSVSS. The SH2 domain maps to 381-476; sequence CYWGVMDRYE…FFEPLLTISL (96 aa). One can recognise an SOCS box domain in the interval 471-520; sequence LLTISLNRTFPFSLQYICRAVICRCTTYDGIDGLPLPSMLQDFLKEYHYK.

As to quaternary structure, interacts with IL4R; inhibits IL4 signaling. Interacts with EGFR. Interacts with ELOB and ELOC; mediates EGFR ubiquitination and degradation. Phosphorylated. Phosphorylation is induced by EGF.

Its pathway is protein modification; protein ubiquitination. Functionally, SOCS family proteins form part of a classical negative feedback system that regulates cytokine signal transduction. May be a substrate-recognition component of a SCF-like ECS (Elongin BC-CUL2/5-SOCS-box protein) E3 ubiquitin-protein ligase complex which mediates the ubiquitination and subsequent proteasomal degradation of target proteins. Inhibits for instance EGF signaling by mediating the degradation of the EGF receptor/EGFR. Involved in the regulation of T-helper cell differentiation by inhibiting of the IL4 signaling pathway which promotes differentiation into the Th2 phenotype. Can also partially inhibit IL6 and LIF signaling. The protein is Suppressor of cytokine signaling 5 (SOCS5) of Homo sapiens (Human).